A 356-amino-acid polypeptide reads, in one-letter code: Tyrosinase P (356 aa).

Positions 1–19 (MGFYRNLVLVAASCTQALG) are cleaved as a signal peptide. A glycan (N-linked (GlcNAc...) asparagine) is linked at Asn81. The Cu cation site is built by His87 and His96. Residues Asn148 and Asn193 are each glycosylated (N-linked (GlcNAc...) asparagine). His203 serves as a coordination point for Cu cation. Asn226 carries N-linked (GlcNAc...) asparagine glycosylation. 2 residues coordinate Cu cation: His263 and His286. An N-linked (GlcNAc...) asparagine glycan is attached at Asn309.

It belongs to the tyrosinase family. The cofactor is Cu(2+). Post-translationally, glycosylated.

It localises to the endoplasmic reticulum lumen. It is found in the golgi apparatus lumen. It catalyses the reaction aspulvinone E + O2 = (5Z)-3-(3,4-dihydroxyphenyl)-5-[(3,4-dihydroxyphenyl)methylidene]-5-oxo-2,5-dihydrofuran-3-olate. It carries out the reaction aspulvinone E + O2 = (2Z)-2-[(3,4-dioxocyclohexa-1,5-dien-1-yl)methylidene]-4-(4-hydroxyphenyl)-5-oxo-2,5-dihydrofuran-3-olate + H2O. With respect to regulation, activity is inhibited by the presence of dithiothreitol (DTT). Functionally, tyrosinase; part of the gene cluster that mediates the biosynthesis of Asp-melanin, a pigment that confers resistance against UV light and hampers phagocytosis by soil amoeba. The nonribosomal peptide synthase melA converts 4-hydroxyphenylpyruvate (4-HPPA) to aspulvinone E. The tyrosinase tyrP then performs hydroxylations of both aromatic moieties of aspulvinone E. The product of tyrP is highly unstable, and, due to the high reactivity of methides and ortho-diquinones, the polymeric Asp-melanin forms spontaneously. The chain is Tyrosinase P (tyrP) from Aspergillus terreus.